The following is a 408-amino-acid chain: Serine/threonine transporter SstT (408 aa).

The next 9 helical transmembrane spans lie at 19–39, 48–68, 86–106, 143–163, 193–213, 223–243, 294–314, 322–342, and 367–387; these read SLVS…VISP, LGSL…LVLV, IVGL…LLSF, VTAV…GLGF, FAPL…GFSA, VLLS…VFII, IPLG…VLTL, IEVS…SACG, and VAMQ…SAET.

Belongs to the dicarboxylate/amino acid:cation symporter (DAACS) (TC 2.A.23) family.

Its subcellular location is the cell inner membrane. It carries out the reaction L-serine(in) + Na(+)(in) = L-serine(out) + Na(+)(out). The enzyme catalyses L-threonine(in) + Na(+)(in) = L-threonine(out) + Na(+)(out). Functionally, involved in the import of serine and threonine into the cell, with the concomitant import of sodium (symport system). The chain is Serine/threonine transporter SstT from Colwellia psychrerythraea (strain 34H / ATCC BAA-681) (Vibrio psychroerythus).